Consider the following 477-residue polypeptide: tRNA-2-methylthio-N(6)-dimethylallyladenosine synthase (477 aa).

In terms of domain architecture, MTTase N-terminal spans Arg-9 to Thr-129. [4Fe-4S] cluster-binding residues include Cys-18, Cys-54, Cys-92, Cys-170, Cys-174, and Cys-177. Residues Arg-156 to Gln-386 enclose the Radical SAM core domain. Residues Arg-391–Ser-453 enclose the TRAM domain. The segment at Lys-454–Ala-477 is disordered. Residues Ala-464 to Ala-477 are compositionally biased toward low complexity.

Belongs to the methylthiotransferase family. MiaB subfamily. In terms of assembly, monomer. [4Fe-4S] cluster serves as cofactor.

The protein localises to the cytoplasm. The enzyme catalyses N(6)-dimethylallyladenosine(37) in tRNA + (sulfur carrier)-SH + AH2 + 2 S-adenosyl-L-methionine = 2-methylsulfanyl-N(6)-dimethylallyladenosine(37) in tRNA + (sulfur carrier)-H + 5'-deoxyadenosine + L-methionine + A + S-adenosyl-L-homocysteine + 2 H(+). Its function is as follows. Catalyzes the methylthiolation of N6-(dimethylallyl)adenosine (i(6)A), leading to the formation of 2-methylthio-N6-(dimethylallyl)adenosine (ms(2)i(6)A) at position 37 in tRNAs that read codons beginning with uridine. This Nitrobacter winogradskyi (strain ATCC 25391 / DSM 10237 / CIP 104748 / NCIMB 11846 / Nb-255) protein is tRNA-2-methylthio-N(6)-dimethylallyladenosine synthase.